We begin with the raw amino-acid sequence, 626 residues long: Myelin-associated glycoprotein (626 aa).

An N-terminal signal peptide occupies residues 1 to 19 (MIFLTTLPLFWIMISASRG). The interval 20–325 (GHWGAWMPSS…RTVELSVMYA (306 aa)) is interaction with RTN4R and RTN4RL2. The Extracellular segment spans residues 20–516 (GHWGAWMPSS…HRLMWAKIGP (497 aa)). In terms of domain architecture, Ig-like V-type spans 22–120 (WGAWMPSSIS…LGGKYYFRGD (99 aa)). Disulfide bonds link C37–C165, C42–C100, and C159–C217. 65-67 (YPK) lines the a ganglioside GT1b (d18:1(4E)) pocket. A glycan (N-linked (GlcNAc...) asparagine) is linked at N99. A ganglioside GT1b (d18:1(4E)) is bound by residues R118 and 124–128 (YNQYT). 4 consecutive Ig-like C2-type domains span residues 139–237 (NTPN…LDVK), 241–325 (VIVE…VMYA), 327–412 (WKPT…VEFA), and 413–508 (PIIL…GAHR). N223 and N246 each carry an N-linked (GlcNAc...) asparagine glycan. C261 and C305 are joined by a disulfide. N-linked (GlcNAc...) asparagine glycosylation is found at N315 and N332. C347 and C392 are joined by a disulfide. Residue N406 is glycosylated (N-linked (GlcNAc...) asparagine). 2 disulfide bridges follow: C421–C430 and C432–C488. N-linked (GlcNAc...) asparagine glycosylation is found at N450 and N454. A helical membrane pass occupies residues 517–536 (VGAVVAFAILIAIVCYITQT). C531 carries S-palmitoyl cysteine lipidation. At 537-626 (RRKKNVTESP…LAEYAEIRVK (90 aa)) the chain is on the cytoplasmic side. A phosphoserine mark is found at S545, S547, and S549. The required for normal axon myelination in the central nervous system stretch occupies residues 577–626 (LGSERRLLGLRGEPPELDLSYSHSDLGKRPTKDSYTLTEELAEYAEIRVK). The tract at residues 581 to 608 (RRLLGLRGEPPELDLSYSHSDLGKRPTK) is disordered.

Belongs to the immunoglobulin superfamily. SIGLEC (sialic acid binding Ig-like lectin) family. Monomer and homodimer. Interacts (via the first three N-terminal Ig-like domains) with RTN4R and RTN4RL2. Interacts with isoform 2 of BSG. N-glycosylated. In terms of processing, phosphorylated on tyrosine residues. Post-translationally, ubiquitinated, leading to proteasomal degradation. In terms of tissue distribution, detected in myelin. Detected in olfactory bulb and throughout the brain (at protein level). Detected in brain.

It localises to the cell membrane. Its subcellular location is the membrane raft. Adhesion molecule that mediates interactions between myelinating cells and neurons by binding to neuronal sialic acid-containing gangliosides and to the glycoproteins RTN4R and RTN4RL2. Not required for initial myelination, but seems to play a role in the maintenance of normal axon myelination. Protects motoneurons against apoptosis, also after injury; protection against apoptosis is probably mediated via interaction with neuronal RTN4R and RTN4RL2. Required to prevent degeneration of myelinated axons in adults; this probably depends on binding to gangliosides on the axon cell membrane. Negative regulator of neurite outgrowth; in dorsal root ganglion neurons the inhibition is mediated primarily via binding to neuronal RTN4R or RTN4RL2 and to a lesser degree via binding to neuronal gangliosides. In cerebellar granule cells the inhibition is mediated primarily via binding to neuronal gangliosides. In sensory neurons, inhibition of neurite extension depends only partially on RTN4R, RTN4RL2 and gangliosides. Inhibits axon longitudinal growth. Inhibits axon outgrowth by binding to RTN4R. Preferentially binds to alpha-2,3-linked sialic acid. Binds ganglioside Gt1b. The polypeptide is Myelin-associated glycoprotein (Mag) (Rattus norvegicus (Rat)).